We begin with the raw amino-acid sequence, 482 residues long: ATP synthase subunit beta (482 aa).

An ATP-binding site is contributed by 162–169 (GGAGVGKT).

It belongs to the ATPase alpha/beta chains family. In terms of assembly, F-type ATPases have 2 components, CF(1) - the catalytic core - and CF(0) - the membrane proton channel. CF(1) has five subunits: alpha(3), beta(3), gamma(1), delta(1), epsilon(1). CF(0) has four main subunits: a(1), b(1), b'(1) and c(9-12).

Its subcellular location is the cellular thylakoid membrane. The catalysed reaction is ATP + H2O + 4 H(+)(in) = ADP + phosphate + 5 H(+)(out). Produces ATP from ADP in the presence of a proton gradient across the membrane. The catalytic sites are hosted primarily by the beta subunits. The sequence is that of ATP synthase subunit beta from Nostoc sp. (strain PCC 7120 / SAG 25.82 / UTEX 2576).